A 254-amino-acid polypeptide reads, in one-letter code: Ubiquinone/menaquinone biosynthesis C-methyltransferase UbiE (254 aa).

Residues Thr77, Asp98, 126-127 (NA), and Ser143 contribute to the S-adenosyl-L-methionine site.

The protein belongs to the class I-like SAM-binding methyltransferase superfamily. MenG/UbiE family.

It carries out the reaction a 2-demethylmenaquinol + S-adenosyl-L-methionine = a menaquinol + S-adenosyl-L-homocysteine + H(+). The enzyme catalyses a 2-methoxy-6-(all-trans-polyprenyl)benzene-1,4-diol + S-adenosyl-L-methionine = a 5-methoxy-2-methyl-3-(all-trans-polyprenyl)benzene-1,4-diol + S-adenosyl-L-homocysteine + H(+). It functions in the pathway quinol/quinone metabolism; menaquinone biosynthesis; menaquinol from 1,4-dihydroxy-2-naphthoate: step 2/2. Its pathway is cofactor biosynthesis; ubiquinone biosynthesis. Functionally, methyltransferase required for the conversion of demethylmenaquinol (DMKH2) to menaquinol (MKH2) and the conversion of 2-polyprenyl-6-methoxy-1,4-benzoquinol (DDMQH2) to 2-polyprenyl-3-methyl-6-methoxy-1,4-benzoquinol (DMQH2). The polypeptide is Ubiquinone/menaquinone biosynthesis C-methyltransferase UbiE (Blochmanniella floridana).